A 658-amino-acid chain; its full sequence is Threonine--tRNA ligase (658 aa).

One can recognise a TGS domain in the interval 1–64 (MSCSISLSFP…GQSGQVEIIT (64 aa)). Residues 246-549 (DHRRLGREMD…LIENFAGHMP (304 aa)) are catalytic. 3 residues coordinate Zn(2+): C343, H394, and H526.

It belongs to the class-II aminoacyl-tRNA synthetase family. In terms of assembly, homodimer. It depends on Zn(2+) as a cofactor.

Its subcellular location is the cytoplasm. The catalysed reaction is tRNA(Thr) + L-threonine + ATP = L-threonyl-tRNA(Thr) + AMP + diphosphate + H(+). Its function is as follows. Catalyzes the attachment of threonine to tRNA(Thr) in a two-step reaction: L-threonine is first activated by ATP to form Thr-AMP and then transferred to the acceptor end of tRNA(Thr). Also edits incorrectly charged L-seryl-tRNA(Thr). The sequence is that of Threonine--tRNA ligase from Bartonella tribocorum (strain CIP 105476 / IBS 506).